A 125-amino-acid polypeptide reads, in one-letter code: Large ribosomal subunit protein bL12 (125 aa).

The protein belongs to the bacterial ribosomal protein bL12 family. Homodimer. Part of the ribosomal stalk of the 50S ribosomal subunit. Forms a multimeric L10(L12)X complex, where L10 forms an elongated spine to which 2 to 4 L12 dimers bind in a sequential fashion. Binds GTP-bound translation factors.

Its function is as follows. Forms part of the ribosomal stalk which helps the ribosome interact with GTP-bound translation factors. Is thus essential for accurate translation. In Gluconacetobacter diazotrophicus (strain ATCC 49037 / DSM 5601 / CCUG 37298 / CIP 103539 / LMG 7603 / PAl5), this protein is Large ribosomal subunit protein bL12.